The primary structure comprises 567 residues: Urease subunit alpha (567 aa).

In terms of domain architecture, Urease spans 128–567; the sequence is GGIDPHIHFI…LPLAQLYHLF (440 aa). Ni(2+) contacts are provided by H133, H135, and K216. K216 is modified (N6-carboxylysine). H218 lines the substrate pocket. Residues H245 and H271 each coordinate Ni(2+). H319 (proton donor) is an active-site residue. Position 359 (D359) interacts with Ni(2+).

This sequence belongs to the metallo-dependent hydrolases superfamily. Urease alpha subunit family. As to quaternary structure, heterotrimer of UreA (gamma), UreB (beta) and UreC (alpha) subunits. Three heterotrimers associate to form the active enzyme. It depends on Ni cation as a cofactor. Post-translationally, carboxylation allows a single lysine to coordinate two nickel ions.

The protein resides in the cytoplasm. It catalyses the reaction urea + 2 H2O + H(+) = hydrogencarbonate + 2 NH4(+). It participates in nitrogen metabolism; urea degradation; CO(2) and NH(3) from urea (urease route): step 1/1. The sequence is that of Urease subunit alpha from Marinobacter nauticus (strain ATCC 700491 / DSM 11845 / VT8) (Marinobacter aquaeolei).